A 1383-amino-acid chain; its full sequence is Spike glycoprotein (1383 aa).

A signal peptide spans 1–25; that stretch reads MRSLIYFWLLLPVLPTLSLPQDVTR. Residues 26–734 form an S1 region; it reads CQSTTNFRRF…TRELPGFFYH (709 aa). Residues 26-1324 are Virion surface-facing; that stretch reads CQSTTNFRRF…NRVETYIKWP (1299 aa). Positions 617–745 are interaction with host ANPEP; sequence FQFTKGELIT…NDGSNCTEPV (129 aa). Residues 735 to 1383 form an S2 region; it reads SNDGSNCTEP…YEAFEKVHVQ (649 aa). The segment at 955 to 975 is fusion peptide; it reads IGGMALGGITAAAALPFSYAV. Residues 969-1088 are heptad repeat 1 (HR1); it reads LPFSYAVQAR…QVDRLITGRL (120 aa). Coiled coils occupy residues 1036-1080 and 1272-1314; these read QEVV…DVQV and TYLN…LEWL. Residues 1240-1336 are heptad repeat 2 (HR2); it reads PDYIDVNKTL…VWLIIVIVLI (97 aa). A helical membrane pass occupies residues 1325 to 1344; sequence WWVWLIIVIVLIFVVSLLVF. Residues 1345 to 1383 lie on the Intravirion side of the membrane; it reads CCISTGCCGCCGCCGACFSGCCRGPRLQPYEAFEKVHVQ. Positions 1379-1383 match the KxHxx motif; sequence KVHVQ.

Belongs to the alphacoronaviruses spike protein family. Homotrimer. During virus morphogenesis, found in a complex with M and HE proteins. Interacts with host ANPEP.

It localises to the virion membrane. Its subcellular location is the host endoplasmic reticulum-Golgi intermediate compartment membrane. In terms of biological role, S1 region attaches the virion to the cell membrane by interacting with host ANPEP/aminopeptidase N, initiating the infection. Binding to the receptor probably induces conformational changes in the S glycoprotein unmasking the fusion peptide of S2 region and activating membranes fusion. S2 region belongs to the class I viral fusion protein. Under the current model, the protein has at least 3 conformational states: pre-fusion native state, pre-hairpin intermediate state, and post-fusion hairpin state. During viral and target cell membrane fusion, the coiled coil regions (heptad repeats) regions assume a trimer-of-hairpins structure, positioning the fusion peptide in close proximity to the C-terminal region of the ectodomain. The formation of this structure appears to drive apposition and subsequent fusion of viral and target cell membranes. In Porcine epidemic diarrhea virus (strain CV777) (PEDV), this protein is Spike glycoprotein.